The following is a 422-amino-acid chain: Serine hydroxymethyltransferase (422 aa).

(6S)-5,6,7,8-tetrahydrofolate contacts are provided by residues Leu-121 and 125-127 (GHL). Residue Lys-230 is modified to N6-(pyridoxal phosphate)lysine. A (6S)-5,6,7,8-tetrahydrofolate-binding site is contributed by 355–357 (SPF).

The protein belongs to the SHMT family. Homodimer. Pyridoxal 5'-phosphate is required as a cofactor.

The protein localises to the cytoplasm. It catalyses the reaction (6R)-5,10-methylene-5,6,7,8-tetrahydrofolate + glycine + H2O = (6S)-5,6,7,8-tetrahydrofolate + L-serine. The protein operates within one-carbon metabolism; tetrahydrofolate interconversion. Its pathway is amino-acid biosynthesis; glycine biosynthesis; glycine from L-serine: step 1/1. Functionally, catalyzes the reversible interconversion of serine and glycine with tetrahydrofolate (THF) serving as the one-carbon carrier. This reaction serves as the major source of one-carbon groups required for the biosynthesis of purines, thymidylate, methionine, and other important biomolecules. Also exhibits THF-independent aldolase activity toward beta-hydroxyamino acids, producing glycine and aldehydes, via a retro-aldol mechanism. The chain is Serine hydroxymethyltransferase from Teredinibacter turnerae (strain ATCC 39867 / T7901).